Consider the following 427-residue polypeptide: Terminal nucleotidyltransferase 5B (427 aa).

A compositionally biased stretch (acidic residues) spans 1–11; it reads MMPSESGDESL. The tract at residues 1 to 46 is disordered; it reads MMPSESGDESLEQPAAQVGTGAASAVATAGAAGGGPDLEASSASLG. Low complexity predominate over residues 15 to 30; it reads AAQVGTGAASAVATAG.

It belongs to the TENT family.

It localises to the cytoplasm. The protein resides in the nucleus. It catalyses the reaction RNA(n) + ATP = RNA(n)-3'-adenine ribonucleotide + diphosphate. In terms of biological role, catalyzes the transfer of one adenosine molecule from an ATP to an mRNA poly(A) tail bearing a 3'-OH terminal group in an ATP hydrolysis-dependent manner. May be involved in maintaining the translation efficiency of at least some genes through preventing degradation of their mRNAs. Prefers RNA molecules that are adenosine-rich close to 3'-end. In addition, may inhibit cell proliferation and cell cycle progression through ubiquitination of beta-catenin/CTNNB1. The chain is Terminal nucleotidyltransferase 5B from Rattus norvegicus (Rat).